The sequence spans 279 residues: 4-hydroxy-3-methylbut-2-enyl diphosphate reductase (279 aa).

Cys12 is a [4Fe-4S] cluster binding site. His42 and His74 together coordinate (2E)-4-hydroxy-3-methylbut-2-enyl diphosphate. Positions 42 and 74 each coordinate dimethylallyl diphosphate. The isopentenyl diphosphate site is built by His42 and His74. Cys96 is a binding site for [4Fe-4S] cluster. (2E)-4-hydroxy-3-methylbut-2-enyl diphosphate is bound at residue His124. A dimethylallyl diphosphate-binding site is contributed by His124. His124 is a binding site for isopentenyl diphosphate. Catalysis depends on Glu126, which acts as the Proton donor. Residue Thr162 participates in (2E)-4-hydroxy-3-methylbut-2-enyl diphosphate binding. Cys190 lines the [4Fe-4S] cluster pocket. 4 residues coordinate (2E)-4-hydroxy-3-methylbut-2-enyl diphosphate: Ser218, Ser219, Asn220, and Ser263. Dimethylallyl diphosphate contacts are provided by Ser218, Ser219, Asn220, and Ser263. 4 residues coordinate isopentenyl diphosphate: Ser218, Ser219, Asn220, and Ser263.

It belongs to the IspH family. [4Fe-4S] cluster is required as a cofactor.

It carries out the reaction isopentenyl diphosphate + 2 oxidized [2Fe-2S]-[ferredoxin] + H2O = (2E)-4-hydroxy-3-methylbut-2-enyl diphosphate + 2 reduced [2Fe-2S]-[ferredoxin] + 2 H(+). The catalysed reaction is dimethylallyl diphosphate + 2 oxidized [2Fe-2S]-[ferredoxin] + H2O = (2E)-4-hydroxy-3-methylbut-2-enyl diphosphate + 2 reduced [2Fe-2S]-[ferredoxin] + 2 H(+). It functions in the pathway isoprenoid biosynthesis; dimethylallyl diphosphate biosynthesis; dimethylallyl diphosphate from (2E)-4-hydroxy-3-methylbutenyl diphosphate: step 1/1. Its pathway is isoprenoid biosynthesis; isopentenyl diphosphate biosynthesis via DXP pathway; isopentenyl diphosphate from 1-deoxy-D-xylulose 5-phosphate: step 6/6. Catalyzes the conversion of 1-hydroxy-2-methyl-2-(E)-butenyl 4-diphosphate (HMBPP) into a mixture of isopentenyl diphosphate (IPP) and dimethylallyl diphosphate (DMAPP). Acts in the terminal step of the DOXP/MEP pathway for isoprenoid precursor biosynthesis. This chain is 4-hydroxy-3-methylbut-2-enyl diphosphate reductase, found in Alkaliphilus oremlandii (strain OhILAs) (Clostridium oremlandii (strain OhILAs)).